A 540-amino-acid chain; its full sequence is MTIIAISIMNVVIGIAILGVILRKKIMPNQKFQRIFILGVQGILIVLSGIMLIGCEGTDIINRISPYINMVTVYSNNVNINIGYSIDGISAIFIFLTIILILSCNLISIRVIKEKTEQKFQIMLLLTEILIINFFAATDLVQLYIVYEATLIPMVIMIGVWGSRTEKKIAAFQILIYTLIGSIFMLMSIGILYSTLGTTDYIMIREYIDVLPENVRKLIFIGFFIGFAVKIPIAPLHLWLLRAHVEAPTAGSVLLAGILLKLGGYGYIRYNIGLFPDLCEYYFPIIGGICLISILYTGIATLTQLDVKRIVAYSSISHMNVIVLGLFSGVLQGIEGGIILMIGHGVVSGGLFLCIGVIYDRCKTRIVYAYNNLVHVMPIMAILFFLLVLGNIAFPITSNFVGELLIFIGLIKKNIIIAFFSALSMIVTAIYSFWLYNRIFFVNEIIKREANEVISSKGQIVADMNALFLIEDVMKKKEERGIDDIGQPKEVKKEQLIYSDVNIFEFTSISLMVIMMIIIGMKPSVVEGFIAINCLELISK.

The next 14 membrane-spanning stretches (helical) occupy residues 2–22, 35–55, 89–109, 118–138, 140–160, 172–192, 218–238, 248–268, 282–302, 310–330, 338–358, 376–396, 415–435, and 501–521; these read TIIAISIMNVVIGIAILGVIL, IFILGVQGILIVLSGIMLIGC, ISAIFIFLTIILILSCNLISI, QKFQIMLLLTEILIINFFAAT, LVQLYIVYEATLIPMVIMIGV, FQILIYTLIGSIFMLMSIGIL, LIFIGFFIGFAVKIPIAPLHL, PTAGSVLLAGILLKLGGYGYI, YFPIIGGICLISILYTGIATL, IVAYSSISHMNVIVLGLFSGV, IILMIGHGVVSGGLFLCIGVI, VMPIMAILFFLLVLGNIAFPI, IIIAFFSALSMIVTAIYSFWL, and VNIFEFTSISLMVIMMIIIGM.

It belongs to the complex I subunit 4 family.

The protein resides in the mitochondrion membrane. It carries out the reaction a ubiquinone + NADH + 5 H(+)(in) = a ubiquinol + NAD(+) + 4 H(+)(out). Functionally, core subunit of the mitochondrial membrane respiratory chain NADH dehydrogenase (Complex I) that is believed to belong to the minimal assembly required for catalysis. Complex I functions in the transfer of electrons from NADH to the respiratory chain. The immediate electron acceptor for the enzyme is believed to be ubiquinone. In Dictyostelium discoideum (Social amoeba), this protein is NADH-ubiquinone oxidoreductase chain 4 (nad4).